A 113-amino-acid chain; its full sequence is Dolichyl-diphosphooligosaccharide--protein glycosyltransferase subunit DAD1 (113 aa).

Ser-2 is subject to N-acetylserine. At 2 to 30 the chain is on the cytoplasmic side; sequence SASVVSVISRFLEEYLSSTPQRLKLLDAY. Residues 31–51 traverse the membrane as a helical segment; sequence LLYILLTGALQFGYCLLVGTF. A topological domain (lumenal) is located at residue Pro-52. Residues 53–73 form a helical membrane-spanning segment; that stretch reads FNSFLSGFISCVGSFILAVCL. At 74–92 the chain is on the cytoplasmic side; it reads RIQINPQNKADFQGISPER. The helical transmembrane segment at 93–113 threads the bilayer; that stretch reads AFADFLFASTILHLVVMNFVG.

This sequence belongs to the DAD/OST2 family. In terms of assembly, component of the oligosaccharyltransferase (OST) complex. OST exists in two different complex forms which contain common core subunits RPN1, RPN2, OST48, OST4, DAD1 and TMEM258, either STT3A or STT3B as catalytic subunits, and form-specific accessory subunits. STT3A complex assembly occurs through the formation of 3 subcomplexes. Subcomplex 1 contains RPN1 and TMEM258, subcomplex 2 contains the STT3A-specific subunits STT3A, DC2/OSTC, and KCP2 as well as the core subunit OST4, and subcomplex 3 contains RPN2, DAD1, and OST48. The STT3A complex can form stable complexes with the Sec61 complex or with both the Sec61 and TRAP complexes.

It localises to the endoplasmic reticulum membrane. It participates in protein modification; protein glycosylation. Its function is as follows. Subunit of the oligosaccharyl transferase (OST) complex that catalyzes the initial transfer of a defined glycan (Glc(3)Man(9)GlcNAc(2) in eukaryotes) from the lipid carrier dolichol-pyrophosphate to an asparagine residue within an Asn-X-Ser/Thr consensus motif in nascent polypeptide chains, the first step in protein N-glycosylation. N-glycosylation occurs cotranslationally and the complex associates with the Sec61 complex at the channel-forming translocon complex that mediates protein translocation across the endoplasmic reticulum (ER). All subunits are required for a maximal enzyme activity. This Mus musculus (Mouse) protein is Dolichyl-diphosphooligosaccharide--protein glycosyltransferase subunit DAD1.